Reading from the N-terminus, the 299-residue chain is Undecaprenyl-diphosphatase (299 aa).

The next 8 helical transmembrane spans lie at 10–32 (LFSLMILLAATSELLAACWRNLV), 63–83 (PGVSATAVIQLGSILAVIAYF), 112–132 (LAIAIGTMPILLAGMAIKLFW), 143–163 (LPSIAVVSIVMALLLALAESF), 178–198 (GFVVGLAQALALIPGVSRSGS), 213–233 (AARFCFLLGIPAITLAGLVEL), 243–263 (GGVLPLLVGIVSAAFVSWLAI), and 276–296 (WIFVVYRLLFGVLVLAWWLSG).

Belongs to the UppP family.

The protein resides in the cell inner membrane. The enzyme catalyses di-trans,octa-cis-undecaprenyl diphosphate + H2O = di-trans,octa-cis-undecaprenyl phosphate + phosphate + H(+). Functionally, catalyzes the dephosphorylation of undecaprenyl diphosphate (UPP). Confers resistance to bacitracin. In Prochlorococcus marinus (strain MIT 9313), this protein is Undecaprenyl-diphosphatase.